We begin with the raw amino-acid sequence, 280 residues long: uncharacterized protein (280 aa).

This is an uncharacterized protein from Acanthamoeba polyphaga mimivirus (APMV).